Here is a 326-residue protein sequence, read N- to C-terminus: Neuferricin homolog (326 aa).

Residues 1–34 (MEKNRRKKDDAGVMTKTLAGVAALTFLVSFICSS) form the signal peptide. The region spanning 98 to 197 (KHVFTPEQLH…KEYPLVGVVA (100 aa)) is the Cytochrome b5 heme-binding domain.

It belongs to the cytochrome b5 family. MAPR subfamily.

The protein localises to the secreted. Functionally, heme-binding protein. This is Neuferricin homolog from Caenorhabditis briggsae.